We begin with the raw amino-acid sequence, 181 residues long: MKSIAVTGYKNFELGIFKKDADEAVYIKETIKRHLLPLVEDGLEWVIISGQLGIELWAGDVVAELKADYPIKLAILEPFEKQSANWNEANQLWASEVLEKADYHAFITKRPYESPAQFAARDGFIIDNTDGALLVYDLEKEGSPKFFYDRAIQAKEQSNYYIDCIDFYALQEVVEDMNQTF.

The protein belongs to the UPF0398 family.

The chain is UPF0398 protein LMOf2365_1918 from Listeria monocytogenes serotype 4b (strain F2365).